The following is a 330-amino-acid chain: Probable transposase for insertion sequence element ISH11 (330 aa).

The protein belongs to the transposase 11 family.

Its function is as follows. Involved in the transposition of the insertion sequence ISH11. The chain is Probable transposase for insertion sequence element ISH11 from Halobacterium salinarum (strain ATCC 29341 / DSM 671 / R1).